We begin with the raw amino-acid sequence, 206 residues long: Large ribosomal subunit protein uL13w (206 aa).

It belongs to the universal ribosomal protein uL13 family.

The protein is Large ribosomal subunit protein uL13w (RPL13AD) of Arabidopsis thaliana (Mouse-ear cress).